The following is a 757-amino-acid chain: Ecdysone receptor (757 aa).

The interval 1–300 is modulating; sequence MMKRRWSNNG…GPAPRLQEEL (300 aa). 2 disordered regions span residues 126-192 and 235-289; these read NSVG…GGGG and LNHH…KKIK. The segment covering 128–138 has biased composition (gly residues); sequence VGGGGGGGGVP. The span at 167–183 shows a compositional bias: low complexity; it reads NSNSNHSNSSSHHTNGH. NR C4-type zinc fingers lie at residues 301–321 and 337–361; these read CLVC…CEGC and CKFG…LKKC. A DNA-binding region (nuclear receptor) is located at residues 301–373; the sequence is CLVCGDRASG…VGMRPECVVP (73 aa). Positions 442 to 677 constitute an NR LBD domain; that stretch reads NQLAVIYKLI…FLEEIWDVHA (236 aa). A compositionally biased stretch (low complexity) spans 717-734; the sequence is TSMATSSSSSLSPSAAST. The segment at 717-739 is disordered; that stretch reads TSMATSSSSSLSPSAASTPNGGA.

This sequence belongs to the nuclear hormone receptor family. NR1 subfamily.

The protein resides in the nucleus. Functionally, receptor for ecdysone. Binds to ecdysone response elements (ECRES). This is Ecdysone receptor (EcR) from Lucilia cuprina (Green bottle fly).